A 237-amino-acid chain; its full sequence is Ribonuclease PH (237 aa).

Phosphate-binding positions include R86 and 124-126; that span reads GTR.

This sequence belongs to the RNase PH family. In terms of assembly, homohexameric ring arranged as a trimer of dimers.

The catalysed reaction is tRNA(n+1) + phosphate = tRNA(n) + a ribonucleoside 5'-diphosphate. Functionally, phosphorolytic 3'-5' exoribonuclease that plays an important role in tRNA 3'-end maturation. Removes nucleotide residues following the 3'-CCA terminus of tRNAs; can also add nucleotides to the ends of RNA molecules by using nucleoside diphosphates as substrates, but this may not be physiologically important. Probably plays a role in initiation of 16S rRNA degradation (leading to ribosome degradation) during starvation. The polypeptide is Ribonuclease PH (Shewanella piezotolerans (strain WP3 / JCM 13877)).